We begin with the raw amino-acid sequence, 436 residues long: UDP-N-acetylmuramate--L-alanine ligase (436 aa).

Residue glycine 111–serine 117 participates in ATP binding.

The protein belongs to the MurCDEF family.

It localises to the cytoplasm. It carries out the reaction UDP-N-acetyl-alpha-D-muramate + L-alanine + ATP = UDP-N-acetyl-alpha-D-muramoyl-L-alanine + ADP + phosphate + H(+). It participates in cell wall biogenesis; peptidoglycan biosynthesis. Its function is as follows. Cell wall formation. This Lactiplantibacillus plantarum (strain ATCC BAA-793 / NCIMB 8826 / WCFS1) (Lactobacillus plantarum) protein is UDP-N-acetylmuramate--L-alanine ligase.